We begin with the raw amino-acid sequence, 113 residues long: Phosphoribosyl-ATP pyrophosphatase (113 aa).

The protein belongs to the PRA-PH family.

It is found in the cytoplasm. The enzyme catalyses 1-(5-phospho-beta-D-ribosyl)-ATP + H2O = 1-(5-phospho-beta-D-ribosyl)-5'-AMP + diphosphate + H(+). The protein operates within amino-acid biosynthesis; L-histidine biosynthesis; L-histidine from 5-phospho-alpha-D-ribose 1-diphosphate: step 2/9. The polypeptide is Phosphoribosyl-ATP pyrophosphatase (Janthinobacterium sp. (strain Marseille) (Minibacterium massiliensis)).